We begin with the raw amino-acid sequence, 266 residues long: Maltodextrose utilization protein MalA (266 aa).

Functionally, has a role in maltotetraose utilization. The sequence is that of Maltodextrose utilization protein MalA (malA) from Streptococcus pneumoniae (strain ATCC BAA-255 / R6).